Consider the following 910-residue polypeptide: Eukaryotic translation initiation factor 3 subunit C (910 aa).

A disordered region spans residues 1–21 (MSRFFANGSESESESSEEEIQ). Acidic residues predominate over residues 11–20 (SESESSEEEI). Ser-34, Ser-165, Ser-176, and Ser-185 each carry phosphoserine. The tract at residues 157–279 (FREAPDQESE…IRKRAEDDED (123 aa)) is disordered. Residues 162 to 186 (DQESEAEDEVVALESDGGDAGDDSD) show a composition bias toward acidic residues. Low complexity predominate over residues 194 to 207 (AVPKAVKSAPAKAA). Positions 209-235 (ADDDDSDDSIDWDSDSESETESSDDEN) are enriched in acidic residues. Over residues 240–268 (MRERFLKRTTEKEEKDDDKRKDKRKEQKT) the composition is skewed to basic and acidic residues. The 177-residue stretch at 639-815 (FHMHINLELL…ETVGMHRSEP (177 aa)) folds into the PCI domain. The segment at 847–910 (FFQRGNMGNR…QQQVQTIDEE (64 aa)) is disordered. The span at 862–874 (NRNQNNQGGNWLG) shows a compositional bias: low complexity. A compositionally biased stretch (basic residues) spans 882–891 (RNRNQRGHHK). Residues 895–910 (DRQQQQQQQVQTIDEE) are compositionally biased toward low complexity.

This sequence belongs to the eIF-3 subunit C family. In terms of assembly, component of the eukaryotic translation initiation factor 3 (eIF-3) complex. The eIF-3 complex interacts with pix.

It localises to the cytoplasm. In terms of biological role, component of the eukaryotic translation initiation factor 3 (eIF-3) complex, which is involved in protein synthesis of a specialized repertoire of mRNAs and, together with other initiation factors, stimulates binding of mRNA and methionyl-tRNAi to the 40S ribosome. The eIF-3 complex specifically targets and initiates translation of a subset of mRNAs involved in cell proliferation. This Drosophila melanogaster (Fruit fly) protein is Eukaryotic translation initiation factor 3 subunit C.